Consider the following 428-residue polypeptide: Dihydroorotase (428 aa).

Zn(2+) is bound by residues His56 and His58. Substrate contacts are provided by residues 58-60 (HLR) and Asn90. 3 residues coordinate Zn(2+): Asp150, His177, and His230. Asn276 contributes to the substrate binding site. Asp303 serves as a coordination point for Zn(2+). Asp303 is an active-site residue. A substrate-binding site is contributed by His307.

It belongs to the metallo-dependent hydrolases superfamily. DHOase family. Class I DHOase subfamily. The cofactor is Zn(2+).

It carries out the reaction (S)-dihydroorotate + H2O = N-carbamoyl-L-aspartate + H(+). It participates in pyrimidine metabolism; UMP biosynthesis via de novo pathway; (S)-dihydroorotate from bicarbonate: step 3/3. Its function is as follows. Catalyzes the reversible cyclization of carbamoyl aspartate to dihydroorotate. In Streptomyces coelicolor (strain ATCC BAA-471 / A3(2) / M145), this protein is Dihydroorotase.